Consider the following 98-residue polypeptide: Cystatin-B (98 aa).

Methionine 1 carries the post-translational modification N-acetylmethionine. A Secondary area of contact motif is present at residues 46-50; it reads QVVAG.

This sequence belongs to the cystatin family.

The protein resides in the cytoplasm. In terms of biological role, this is an intracellular thiol proteinase inhibitor. The protein is Cystatin-B (CSTB) of Sus scrofa (Pig).